The sequence spans 1152 residues: Receptor-type guanylate cyclase gcy-8 (1152 aa).

Residues 1-21 form the signal peptide; the sequence is MRTKKAFLLLTFNVLIYLAAC. Over 22–506 the chain is Extracellular; the sequence is QETERILANN…GYRNERCDYT (485 aa). 4 N-linked (GlcNAc...) asparagine glycosylation sites follow: Asn31, Asn55, Asn385, and Asn465. A helical transmembrane segment spans residues 507-527; it reads LIIIGAALILLFIVAAVSAFF. Over 528-1152 the chain is Cytoplasmic; it reads AQKILEKRAL…NLKNPTGLQR (625 aa). The Protein kinase domain maps to 567–857; sequence RTKMSNMNYG…RIKLNVETYL (291 aa). Residues 573-581 and Lys593 contribute to the ATP site; that span reads MNYGSRNHA. Residues 861–899 are a coiled coil; that stretch reads GSLVDQMTRMMEQYANNLEKLVAERTGMLEEANQRADRL. One can recognise a Guanylate cyclase domain in the interval 927–1057; sequence TVLFSDIVGF…DTVNMASRME (131 aa). Mg(2+)-binding residues include Asp932, Ile933, and Asp976.

This sequence belongs to the adenylyl cyclase class-4/guanylyl cyclase family. As to expression, expressed bilaterally in AFD sensory neurons.

It localises to the cell membrane. The protein resides in the cell projection. It is found in the cilium. The enzyme catalyses GTP = 3',5'-cyclic GMP + diphosphate. Inhibited by chloride with an IC(50) of 60 mM. Functionally, guanylate cyclase involved in the production of the second messenger cGMP. Regulates thermotaxis responses in AFD sensory neurons. May regulate AFD neuronal activity such as calcium responses to temperature gradients. Maintains the microvilli receptive ending morphology of the AFD thermosensory neurons by regulating cGMP levels downstream of kcc-3. cGMP levels antagonize the actin cytoskeleton regulator wsp-1. This is Receptor-type guanylate cyclase gcy-8 from Caenorhabditis elegans.